The chain runs to 239 residues: Large ribosomal subunit protein uL2 (239 aa).

Disordered regions lie at residues 1–20 (MGKS…FRSP) and 203–239 (PFGG…GRRK). Over residues 222–239 (PPGRKVGHIAARRTGRRK) the composition is skewed to basic residues.

Belongs to the universal ribosomal protein uL2 family. In terms of assembly, part of the 50S ribosomal subunit. Forms a bridge to the 30S subunit in the 70S ribosome.

Its function is as follows. One of the primary rRNA binding proteins. Required for association of the 30S and 50S subunits to form the 70S ribosome, for tRNA binding and peptide bond formation. It has been suggested to have peptidyltransferase activity; this is somewhat controversial. Makes several contacts with the 16S rRNA in the 70S ribosome. In Pyrococcus horikoshii (strain ATCC 700860 / DSM 12428 / JCM 9974 / NBRC 100139 / OT-3), this protein is Large ribosomal subunit protein uL2.